Consider the following 78-residue polypeptide: Translational regulator CsrA (78 aa).

This sequence belongs to the CsrA/RsmA family. As to quaternary structure, homodimer; the beta-strands of each monomer intercalate to form a hydrophobic core, while the alpha-helices form wings that extend away from the core.

Its subcellular location is the cytoplasm. Its function is as follows. A translational regulator that binds mRNA to regulate translation initiation and/or mRNA stability. Usually binds in the 5'-UTR at or near the Shine-Dalgarno sequence preventing ribosome-binding, thus repressing translation. Its main target seems to be the major flagellin gene, while its function is anatagonized by FliW. In Desulfovibrio desulfuricans (strain ATCC 27774 / DSM 6949 / MB), this protein is Translational regulator CsrA.